The chain runs to 169 residues: MAIREILVVPHPALKQVSQPVEKVDDELRALMDDMLETMYAAPGIGLAAIQIGVPKRVIVMDLAREGEEKQPRYFVNPEILWASDDTAPYEEGCLSVPEYYDEVERPARVKLRYLNYQGEQVEEDAEGLFAVCIQHEMDHLEGVLFIDHLSRLKREQAIKKVKKHAKAA.

Positions 94 and 136 each coordinate Fe cation. The active site involves E137. Residue H140 coordinates Fe cation.

It belongs to the polypeptide deformylase family. It depends on Fe(2+) as a cofactor.

It carries out the reaction N-terminal N-formyl-L-methionyl-[peptide] + H2O = N-terminal L-methionyl-[peptide] + formate. In terms of biological role, removes the formyl group from the N-terminal Met of newly synthesized proteins. Requires at least a dipeptide for an efficient rate of reaction. N-terminal L-methionine is a prerequisite for activity but the enzyme has broad specificity at other positions. In Phenylobacterium zucineum (strain HLK1), this protein is Peptide deformylase.